A 419-amino-acid polypeptide reads, in one-letter code: Light-dependent chlorophyll f synthase (419 aa).

5 consecutive transmembrane segments (helical) span residues 73–90 (YIGW…TAAI), 162–177 (HFII…EWEL), 186–200 (WISL…ASVS), 241–262 (LHQM…HGSL), and 323–337 (CLAA…SAAI). His-162 serves as a coordination point for a chlorophyll. His-242 is an a chlorophyll binding site.

The protein belongs to the reaction center PufL/M/PsbA/D family. As to quaternary structure, homodimer.

The protein resides in the cellular thylakoid membrane. In terms of biological role, synthesizes chlorophyll f or chlorophyllide f (Chl f, 2-formyl chlorophyll a), probably by oxidation of chlorophyll a or chlorophyllide a and reduction of plastoquinone. The reaction is probably light-dependent. Chl f absorbs far red light (FRL, 707 nm in 100% methanol), and is synthesized when cells are grown in FRL, where it provides the advantage of extending the spectral range of harvested light in terrestrial cyanobacteria. Chl f synthesis is probably light-dependent. This is Light-dependent chlorophyll f synthase from Synechococcus sp. (strain ATCC 29403 / PCC 7335).